A 142-amino-acid chain; its full sequence is Large ribosomal subunit protein uL11 (142 aa).

It belongs to the universal ribosomal protein uL11 family. Part of the ribosomal stalk of the 50S ribosomal subunit. Interacts with L10 and the large rRNA to form the base of the stalk. L10 forms an elongated spine to which L12 dimers bind in a sequential fashion forming a multimeric L10(L12)X complex. One or more lysine residues are methylated.

Its function is as follows. Forms part of the ribosomal stalk which helps the ribosome interact with GTP-bound translation factors. In Citrobacter koseri (strain ATCC BAA-895 / CDC 4225-83 / SGSC4696), this protein is Large ribosomal subunit protein uL11.